Here is a 543-residue protein sequence, read N- to C-terminus: CTP synthase (543 aa).

Positions 1-265 (MTKFIFVTGG…DRLVTDRFRI (265 aa)) are amidoligase domain. Residue serine 13 participates in CTP binding. A UTP-binding site is contributed by serine 13. Residues 14–19 (SLGKGI) and aspartate 71 contribute to the ATP site. Residues aspartate 71 and glutamate 139 each coordinate Mg(2+). CTP contacts are provided by residues 146 to 148 (DIE), 186 to 191 (KTKPTQ), and lysine 222. UTP-binding positions include 186–191 (KTKPTQ) and lysine 222. The Glutamine amidotransferase type-1 domain occupies 290-541 (EIAMVGKYVD…VEAASQHKQT (252 aa)). L-glutamine is bound at residue glycine 351. Cysteine 378 serves as the catalytic Nucleophile; for glutamine hydrolysis. L-glutamine-binding positions include 379–382 (LGMQ), glutamate 402, and arginine 469. Active-site residues include histidine 514 and glutamate 516.

It belongs to the CTP synthase family. In terms of assembly, homotetramer.

It carries out the reaction UTP + L-glutamine + ATP + H2O = CTP + L-glutamate + ADP + phosphate + 2 H(+). The catalysed reaction is L-glutamine + H2O = L-glutamate + NH4(+). It catalyses the reaction UTP + NH4(+) + ATP = CTP + ADP + phosphate + 2 H(+). Its pathway is pyrimidine metabolism; CTP biosynthesis via de novo pathway; CTP from UDP: step 2/2. With respect to regulation, allosterically activated by GTP, when glutamine is the substrate; GTP has no effect on the reaction when ammonia is the substrate. The allosteric effector GTP functions by stabilizing the protein conformation that binds the tetrahedral intermediate(s) formed during glutamine hydrolysis. Inhibited by the product CTP, via allosteric rather than competitive inhibition. Catalyzes the ATP-dependent amination of UTP to CTP with either L-glutamine or ammonia as the source of nitrogen. Regulates intracellular CTP levels through interactions with the four ribonucleotide triphosphates. The sequence is that of CTP synthase from Hydrogenovibrio crunogenus (strain DSM 25203 / XCL-2) (Thiomicrospira crunogena).